Reading from the N-terminus, the 409-residue chain is 4-hydroxy-3-methylbut-2-en-1-yl diphosphate synthase (ferredoxin) (409 aa).

Residues 1 to 12 are compositionally biased toward polar residues; the sequence is MQTLDRPNAPTQ. The disordered stretch occupies residues 1-22; the sequence is MQTLDRPNAPTQQPYPEPVYPR. Residues Cys314, Cys317, Cys348, and Glu355 each contribute to the [4Fe-4S] cluster site.

The protein belongs to the IspG family. [4Fe-4S] cluster serves as cofactor.

The catalysed reaction is (2E)-4-hydroxy-3-methylbut-2-enyl diphosphate + 2 oxidized [2Fe-2S]-[ferredoxin] + H2O = 2-C-methyl-D-erythritol 2,4-cyclic diphosphate + 2 reduced [2Fe-2S]-[ferredoxin] + H(+). It participates in isoprenoid biosynthesis; isopentenyl diphosphate biosynthesis via DXP pathway; isopentenyl diphosphate from 1-deoxy-D-xylulose 5-phosphate: step 5/6. Its function is as follows. Converts 2C-methyl-D-erythritol 2,4-cyclodiphosphate (ME-2,4cPP) into 1-hydroxy-2-methyl-2-(E)-butenyl 4-diphosphate. In Synechococcus sp. (strain JA-2-3B'a(2-13)) (Cyanobacteria bacterium Yellowstone B-Prime), this protein is 4-hydroxy-3-methylbut-2-en-1-yl diphosphate synthase (ferredoxin).